The sequence spans 313 residues: Methylenetetrahydrofolate dehydrogenase [NAD(+)] (313 aa).

Cys152 is an active-site residue. Residues 187-188 (RS), 210-211 (DI), and 270-272 (FAG) contribute to the NAD(+) site.

It belongs to the tetrahydrofolate dehydrogenase/cyclohydrolase family. In terms of assembly, homodimer.

The enzyme catalyses (6R)-5,10-methylene-5,6,7,8-tetrahydrofolate + NAD(+) = (6R)-5,10-methenyltetrahydrofolate + NADH. It participates in one-carbon metabolism; tetrahydrofolate interconversion. In terms of biological role, catalyzes oxidation of cytoplasmic one-carbon units for purine biosynthesis. This Dictyostelium discoideum (Social amoeba) protein is Methylenetetrahydrofolate dehydrogenase [NAD(+)] (thfA).